A 404-amino-acid chain; its full sequence is Probable oxalate decarboxylase ARB_04859 (404 aa).

An N-terminal signal peptide occupies residues 1–17 (MKYSAVLVAALAAIADA). The Cupin type-1 1 domain occupies 74 to 215 (FSLSKTRMLY…NFGVPPSTFD (142 aa)). The Mn(2+) site is built by His117, His119, Glu123, and His162. 2 N-linked (GlcNAc...) asparagine glycosylation sites follow: Asn226 and Asn244. Residues 249 to 393 (FHISNAPEIQ…AINVPIEVIE (145 aa)) enclose the Cupin type-1 2 domain. His296, His298, Glu303, and His342 together coordinate Mn(2+). N-linked (GlcNAc...) asparagine glycosylation is present at Asn346. Glu357 functions as the Proton donor in the catalytic mechanism.

It depends on Mn(2+) as a cofactor.

It localises to the secreted. The enzyme catalyses oxalate + H(+) = formate + CO2. Its function is as follows. Converts oxalate to formate and CO(2) in an O(2)-dependent reaction. Can also catalyze minor side reactions: oxalate oxidation to produce H(2)O(2), and oxalate-dependent, H(2)O(2)-independent dye oxidations. The polypeptide is Probable oxalate decarboxylase ARB_04859 (Arthroderma benhamiae (strain ATCC MYA-4681 / CBS 112371) (Trichophyton mentagrophytes)).